We begin with the raw amino-acid sequence, 45 residues long: Photosystem II reaction center protein K (45 aa).

A propeptide spanning residues Met1–Ala8 is cleaved from the precursor. The chain crosses the membrane as a helical span at residues Leu24–Phe44.

Belongs to the PsbK family. In terms of assembly, PSII is composed of 1 copy each of membrane proteins PsbA, PsbB, PsbC, PsbD, PsbE, PsbF, PsbH, PsbI, PsbJ, PsbK, PsbL, PsbM, PsbT, PsbX, PsbY, PsbZ, Psb30/Ycf12, peripheral proteins PsbO, CyanoQ (PsbQ), PsbU, PsbV and a large number of cofactors. It forms dimeric complexes.

It is found in the cellular thylakoid membrane. In terms of biological role, one of the components of the core complex of photosystem II (PSII). PSII is a light-driven water:plastoquinone oxidoreductase that uses light energy to abstract electrons from H(2)O, generating O(2) and a proton gradient subsequently used for ATP formation. It consists of a core antenna complex that captures photons, and an electron transfer chain that converts photonic excitation into a charge separation. In Synechococcus elongatus (strain ATCC 33912 / PCC 7942 / FACHB-805) (Anacystis nidulans R2), this protein is Photosystem II reaction center protein K.